A 702-amino-acid chain; its full sequence is Rho GTPase-activating protein 22 (702 aa).

A PH domain is found at 43 to 151 (PVLKAGWLRK…WVQAIRRVIW (109 aa)). The region spanning 161-355 (QRLEDTVHHE…VLIRKHGQLF (195 aa)) is the Rho-GAP domain. 4 disordered regions span residues 360 to 433 (LEEP…HTLP), 438 to 457 (SFRQ…SSLE), 480 to 511 (RASS…FSST), and 555 to 596 (PSPL…TQAH). Residues Ser-365 and Ser-397 each carry the phosphoserine modification. 4 stretches are compositionally biased toward polar residues: residues 407-421 (SRTS…TGPA), 438-456 (SFRQ…NSSL), 491-504 (GSAQ…NVPP), and 581-594 (SGSS…SPTQ). Residues 594–691 (QAHVRRCRAL…EEFFSTLGSL (98 aa)) adopt a coiled-coil conformation.

Interacts with VEZF1. In terms of tissue distribution, predominantly present in endothelial cells (at protein level).

It is found in the cytoplasm. The protein localises to the nucleus. Rho GTPase-activating protein involved in the signal transduction pathway that regulates endothelial cell capillary tube formation during angiogenesis. Acts as a GTPase activator for the RAC1 by converting it to an inactive GDP-bound state. Inhibits RAC1-dependent lamellipodia formation. May also play a role in transcription regulation via its interaction with VEZF1, by regulating activity of the endothelin-1 (EDN1) promoter. This is Rho GTPase-activating protein 22 (Arhgap22) from Mus musculus (Mouse).